The chain runs to 231 residues: Ribonuclease P protein component 3 (231 aa).

This sequence belongs to the eukaryotic/archaeal RNase P protein component 3 family. Consists of a catalytic RNA component and at least 4-5 protein subunits.

It is found in the cytoplasm. The catalysed reaction is Endonucleolytic cleavage of RNA, removing 5'-extranucleotides from tRNA precursor.. Part of ribonuclease P, a protein complex that generates mature tRNA molecules by cleaving their 5'-ends. The sequence is that of Ribonuclease P protein component 3 from Methanococcus maripaludis (strain C5 / ATCC BAA-1333).